Consider the following 1430-residue polypeptide: Gag-Pol polyprotein (1430 aa).

Residue G2 is the site of N-myristoyl glycine; by host attachment. Residues 7–31 form an interaction with Gp41 region; it reads VLSGGKLDAWEKIRLKPGGKKRYRL. The segment at 8–43 is interaction with host CALM1; sequence LSGGKLDAWEKIRLKPGGKKRYRLKHLVWASRELER. The tract at residues 12 to 19 is interaction with host AP3D1; it reads KLDAWEKI. The interaction with membrane phosphatidylinositol 4,5-bisphosphate and RNA stretch occupies residues 14–33; that stretch reads DAWEKIRLKPGGKKRYRLKH. Positions 16-22 match the Nuclear export signal motif; the sequence is WEKIRLK. The Nuclear localization signal signature appears at 26–32; it reads KKRYRLK. Residues 73–77 form an interaction with membrane phosphatidylinositol 4,5-bisphosphate region; sequence EELKS. Residues 105-124 are disordered; it reads QEEQDKSQQKEQQKAADKEV. Phosphotyrosine; by host is present on Y128. An interaction with human PPIA/CYPA and NUP153 region spans residues 185–223; that stretch reads NTVGGHQAAMQMLKDTINEEAAEWDRLHPVHAGPIPPGQ. The segment at 273-359 is dimerization/Multimerization of capsid protein p24; that stretch reads YSPVSILDIK…GGPGHKARIL (87 aa). 2 CCHC-type zinc fingers span residues 385–402 and 406–423; these read VKCF…NCRA and KGCW…DCTE. The tract at residues 440-479 is disordered; sequence ARKFSSEQTRANSPASRELRVRRGDNPLPEAGAERRGTGS. Residues 445–454 show a composition bias toward polar residues; the sequence is SEQTRANSPA. The tract at residues 484-488 is dimerization of protease; sequence PQITL. One can recognise a Peptidase A2 domain in the interval 503–572; it reads REALLDTGAD…TPVNIIGRNL (70 aa). The active-site For protease activity; shared with dimeric partner is the D508. Dimerization of protease regions lie at residues 532-538 and 571-583; these read GIGGFIK and NLLT…LNFP. A Reverse transcriptase domain is found at 626–816; the sequence is EGKISKIGPE…PPFLWMGYEL (191 aa). Residues D692, D767, and D768 each contribute to the Mg(2+) site. Positions 809–817 are RT 'primer grip'; the sequence is FLWMGYELH. Residues 980–996 carry the Tryptophan repeat motif motif; it reads WEIWWTEYWQATWIPEW. An RNase H type-1 domain is found at 1016-1139; sequence IAGAETFYVD…VDKLVSSGIR (124 aa). Residues D1025, E1060, D1080, and D1131 each coordinate Mg(2+). The segment at 1145-1186 adopts an Integrase-type zinc-finger fold; sequence DGIDKAQEEHEKYHNNWRAMASDFNLPPVVAKEIVANCDKCQ. Zn(2+) contacts are provided by H1154, H1158, C1182, and C1185. An Integrase catalytic domain is found at 1196–1346; that stretch reads VDCSPGIWQL…SAGERIIDII (151 aa). Mg(2+)-binding residues include D1206, D1258, and E1294. The segment at residues 1365 to 1412 is a DNA-binding region (integrase-type); that stretch reads FRVYFRDSRDPVWKGPAKLLWKGEGAVVIQDNNEIKVVPRRKAKIIRD.

As to quaternary structure, homotrimer; further assembles as hexamers of trimers. Interacts with gp41 (via C-terminus). Interacts with host CALM1; this interaction induces a conformational change in the Matrix protein, triggering exposure of the myristate group. Interacts with host AP3D1; this interaction allows the polyprotein trafficking to multivesicular bodies during virus assembly. Part of the pre-integration complex (PIC) which is composed of viral genome, matrix protein, Vpr and integrase. In terms of assembly, homodimer; the homodimer further multimerizes as homohexamers or homopentamers. Interacts with human PPIA/CYPA; This interaction stabilizes the capsid. Interacts with human NUP153. Interacts with host PDZD8; this interaction stabilizes the capsid. Interacts with monkey TRIM5; this interaction destabilizes the capsid. Homodimer, whose active site consists of two apposed aspartic acid residues. As to quaternary structure, heterodimer of p66 RT and p51 RT (RT p66/p51). Heterodimerization of RT is essential for DNA polymerase activity. The overall folding of the subdomains is similar in p66 RT and p51 RT but the spatial arrangements of the subdomains are dramatically different. In terms of assembly, homotetramer; may further associate as a homohexadecamer. Part of the pre-integration complex (PIC) which is composed of viral genome, matrix protein, Vpr and integrase. Interacts with human SMARCB1/INI1 and human PSIP1/LEDGF isoform 1. Interacts with human KPNA3; this interaction might play a role in nuclear import of the pre-integration complex. Interacts with human NUP153; this interaction might play a role in nuclear import of the pre-integration complex. The cofactor is Mg(2+). In terms of processing, specific enzymatic cleavages by the viral protease yield mature proteins. The protease is released by autocatalytic cleavage. The polyprotein is cleaved during and after budding, this process is termed maturation. Proteolytic cleavage of p66 RT removes the RNase H domain to yield the p51 RT subunit. Nucleocapsid protein p7 might be further cleaved after virus entry. Post-translationally, tyrosine phosphorylated presumably in the virion by a host kinase. Phosphorylation is apparently not a major regulator of membrane association. Phosphorylated possibly by host MAPK1; this phosphorylation is necessary for Pin1-mediated virion uncoating. In terms of processing, methylated by host PRMT6, impairing its function by reducing RNA annealing and the initiation of reverse transcription.

The protein localises to the host cell membrane. It localises to the host endosome. It is found in the host multivesicular body. The protein resides in the virion membrane. Its subcellular location is the host nucleus. The protein localises to the host cytoplasm. It localises to the virion. The catalysed reaction is Specific for a P1 residue that is hydrophobic, and P1' variable, but often Pro.. It catalyses the reaction Endohydrolysis of RNA in RNA/DNA hybrids. Three different cleavage modes: 1. sequence-specific internal cleavage of RNA. Human immunodeficiency virus type 1 and Moloney murine leukemia virus enzymes prefer to cleave the RNA strand one nucleotide away from the RNA-DNA junction. 2. RNA 5'-end directed cleavage 13-19 nucleotides from the RNA end. 3. DNA 3'-end directed cleavage 15-20 nucleotides away from the primer terminus.. It carries out the reaction 3'-end directed exonucleolytic cleavage of viral RNA-DNA hybrid.. The enzyme catalyses DNA(n) + a 2'-deoxyribonucleoside 5'-triphosphate = DNA(n+1) + diphosphate. With respect to regulation, protease: The viral protease is inhibited by many synthetic protease inhibitors (PIs), such as amprenavir, atazanavir, indinavir, loprinavir, nelfinavir, ritonavir and saquinavir. Use of protease inhibitors in tritherapy regimens permit more ambitious therapeutic strategies. Reverse transcriptase/ribonuclease H: RT can be inhibited either by nucleoside RT inhibitors (NRTIs) or by non nucleoside RT inhibitors (NNRTIs). NRTIs act as chain terminators, whereas NNRTIs inhibit DNA polymerization by binding a small hydrophobic pocket near the RT active site and inducing an allosteric change in this region. Classical NRTIs are abacavir, adefovir (PMEA), didanosine (ddI), lamivudine (3TC), stavudine (d4T), tenofovir (PMPA), zalcitabine (ddC), and zidovudine (AZT). Classical NNRTIs are atevirdine (BHAP U-87201E), delavirdine, efavirenz (DMP-266), emivirine (I-EBU), and nevirapine (BI-RG-587). The tritherapies used as a basic effective treatment of AIDS associate two NRTIs and one NNRTI. In terms of biological role, mediates, with Gag polyprotein, the essential events in virion assembly, including binding the plasma membrane, making the protein-protein interactions necessary to create spherical particles, recruiting the viral Env proteins, and packaging the genomic RNA via direct interactions with the RNA packaging sequence (Psi). Gag-Pol polyprotein may regulate its own translation, by the binding genomic RNA in the 5'-UTR. At low concentration, the polyprotein would promote translation, whereas at high concentration, the polyprotein would encapsidate genomic RNA and then shut off translation. Targets the polyprotein to the plasma membrane via a multipartite membrane-binding signal, that includes its myristoylated N-terminus. Matrix protein is part of the pre-integration complex. Implicated in the release from host cell mediated by Vpu. Binds to RNA. Its function is as follows. Forms the conical core that encapsulates the genomic RNA-nucleocapsid complex in the virion. Most core are conical, with only 7% tubular. The core is constituted by capsid protein hexamer subunits. The core is disassembled soon after virion entry. Host restriction factors such as TRIM5-alpha or TRIMCyp bind retroviral capsids and cause premature capsid disassembly, leading to blocks in reverse transcription. Capsid restriction by TRIM5 is one of the factors which restricts HIV-1 to the human species. Host PIN1 apparently facilitates the virion uncoating. On the other hand, interactions with PDZD8 or CYPA stabilize the capsid. Functionally, encapsulates and protects viral dimeric unspliced genomic RNA (gRNA). Binds these RNAs through its zinc fingers. Acts as a nucleic acid chaperone which is involved in rearangement of nucleic acid secondary structure during gRNA retrotranscription. Also facilitates template switch leading to recombination. As part of the polyprotein, participates in gRNA dimerization, packaging, tRNA incorporation and virion assembly. In terms of biological role, aspartyl protease that mediates proteolytic cleavages of Gag and Gag-Pol polyproteins during or shortly after the release of the virion from the plasma membrane. Cleavages take place as an ordered, step-wise cascade to yield mature proteins. This process is called maturation. Displays maximal activity during the budding process just prior to particle release from the cell. Also cleaves Nef and Vif, probably concomitantly with viral structural proteins on maturation of virus particles. Hydrolyzes host EIF4GI and PABP1 in order to shut off the capped cellular mRNA translation. The resulting inhibition of cellular protein synthesis serves to ensure maximal viral gene expression and to evade host immune response. Also mediates cleavage of host YTHDF3. Mediates cleavage of host CARD8, thereby activating the CARD8 inflammasome, leading to the clearance of latent HIV-1 in patient CD4(+) T-cells after viral reactivation; in contrast, HIV-1 can evade CARD8-sensing when its protease remains inactive in infected cells prior to viral budding. Multifunctional enzyme that converts the viral RNA genome into dsDNA in the cytoplasm, shortly after virus entry into the cell. This enzyme displays a DNA polymerase activity that can copy either DNA or RNA templates, and a ribonuclease H (RNase H) activity that cleaves the RNA strand of RNA-DNA heteroduplexes in a partially processive 3' to 5' endonucleasic mode. Conversion of viral genomic RNA into dsDNA requires many steps. A tRNA(3)-Lys binds to the primer-binding site (PBS) situated at the 5'-end of the viral RNA. RT uses the 3' end of the tRNA primer to perform a short round of RNA-dependent minus-strand DNA synthesis. The reading proceeds through the U5 region and ends after the repeated (R) region which is present at both ends of viral RNA. The portion of the RNA-DNA heteroduplex is digested by the RNase H, resulting in a ssDNA product attached to the tRNA primer. This ssDNA/tRNA hybridizes with the identical R region situated at the 3' end of viral RNA. This template exchange, known as minus-strand DNA strong stop transfer, can be either intra- or intermolecular. RT uses the 3' end of this newly synthesized short ssDNA to perform the RNA-dependent minus-strand DNA synthesis of the whole template. RNase H digests the RNA template except for two polypurine tracts (PPTs) situated at the 5'-end and near the center of the genome. It is not clear if both polymerase and RNase H activities are simultaneous. RNase H probably can proceed both in a polymerase-dependent (RNA cut into small fragments by the same RT performing DNA synthesis) and a polymerase-independent mode (cleavage of remaining RNA fragments by free RTs). Secondly, RT performs DNA-directed plus-strand DNA synthesis using the PPTs that have not been removed by RNase H as primers. PPTs and tRNA primers are then removed by RNase H. The 3' and 5' ssDNA PBS regions hybridize to form a circular dsDNA intermediate. Strand displacement synthesis by RT to the PBS and PPT ends produces a blunt ended, linear dsDNA copy of the viral genome that includes long terminal repeats (LTRs) at both ends. Its function is as follows. Catalyzes viral DNA integration into the host chromosome, by performing a series of DNA cutting and joining reactions. This enzyme activity takes place after virion entry into a cell and reverse transcription of the RNA genome in dsDNA. The first step in the integration process is 3' processing. This step requires a complex comprising the viral genome, matrix protein, Vpr and integrase. This complex is called the pre-integration complex (PIC). The integrase protein removes 2 nucleotides from each 3' end of the viral DNA, leaving recessed CA OH's at the 3' ends. In the second step, the PIC enters cell nucleus. This process is mediated through integrase and Vpr proteins, and allows the virus to infect a non dividing cell. This ability to enter the nucleus is specific of lentiviruses, other retroviruses cannot and rely on cell division to access cell chromosomes. In the third step, termed strand transfer, the integrase protein joins the previously processed 3' ends to the 5' ends of strands of target cellular DNA at the site of integration. The 5'-ends are produced by integrase-catalyzed staggered cuts, 5 bp apart. A Y-shaped, gapped, recombination intermediate results, with the 5'-ends of the viral DNA strands and the 3' ends of target DNA strands remaining unjoined, flanking a gap of 5 bp. The last step is viral DNA integration into host chromosome. This involves host DNA repair synthesis in which the 5 bp gaps between the unjoined strands are filled in and then ligated. Since this process occurs at both cuts flanking the HIV genome, a 5 bp duplication of host DNA is produced at the ends of HIV-1 integration. Alternatively, Integrase may catalyze the excision of viral DNA just after strand transfer, this is termed disintegration. The protein is Gag-Pol polyprotein (gag-pol) of Human immunodeficiency virus type 1 group M subtype F2 (isolate MP255) (HIV-1).